The sequence spans 55 residues: Trypsin inhibitor ClTI-1 (55 aa).

A Kazal-like domain is found at 1–55; the sequence is SIPPACDKYSRLPGCPRDYSPVCGTDGKTYPNECVLCLSNSEENKNVQIYKSGMC. 3 disulfides stabilise this stretch: Cys6–Cys37, Cys15–Cys34, and Cys23–Cys55.

The protein localises to the secreted. Its function is as follows. Inhibits trypsin and plasmin. The protein is Trypsin inhibitor ClTI-1 of Gallus gallus (Chicken).